Here is a 666-residue protein sequence, read N- to C-terminus: Probable potassium transport system protein Kup (666 aa).

12 consecutive transmembrane segments (helical) span residues 16 to 36, 58 to 78, 99 to 119, 141 to 161, 167 to 187, 221 to 241, 253 to 273, 292 to 312, 343 to 363, 373 to 393, 402 to 422, and 424 to 444; these read GFIIALGIVYGDIGTSPLYTM, ISLIIWTLTLITTIKYVLVAL, TPWLIVPAVIGGATLLSDGAL, IFQNQSNVIFATLFILLLLFA, TGVIGKLFGPIMFIWFAFLGI, IFILGSIFLATTGAEALYSDL, WPFVKVAIILSYCGQGAWILA, FTMHVVILATLAAIIASQALI, TYIPVINWFLFAITTSIVLLF, YGLAITITMLMTTILLSFFLI, VLLMMIFFGILEGIFFLASAV, and FMHGGYVVVIIAVAIIFIMII.

The protein belongs to the HAK/KUP transporter (TC 2.A.72) family.

Its subcellular location is the cell membrane. It carries out the reaction K(+)(in) + H(+)(in) = K(+)(out) + H(+)(out). Functionally, transport of potassium into the cell. Likely operates as a K(+):H(+) symporter. This chain is Probable potassium transport system protein Kup, found in Streptococcus agalactiae serotype III (strain NEM316).